The following is a 481-amino-acid chain: Hyaluronidase-4 (481 aa).

At 1–11 the chain is on the cytoplasmic side; sequence MQLLPEGQLRL. A helical transmembrane segment spans residues 12–32; the sequence is CVFQPVHLTSGLLILFILKSI. Topologically, residues 33–455 are extracellular; it reads SSLKPARLPV…CREMTEASGP (423 aa). 5 disulfide bridges follow: Cys-59–Cys-351, Cys-223–Cys-237, Cys-376–Cys-387, Cys-381–Cys-435, and Cys-437–Cys-446. N-linked (GlcNAc...) asparagine glycosylation is found at Asn-64 and Asn-115. Catalysis depends on Glu-147, which acts as the Proton donor. Asn-232 and Asn-343 each carry an N-linked (GlcNAc...) asparagine glycan. The chain crosses the membrane as a helical span at residues 456–476; sequence SGLSLSSSSVITLCLLVLAGY. Residues 477 to 481 lie on the Cytoplasmic side of the membrane; that stretch reads QSIQL.

Belongs to the glycosyl hydrolase 56 family.

It is found in the membrane. The enzyme catalyses Random hydrolysis of (1-&gt;4)-linkages between N-acetyl-beta-D-glucosamine and D-glucuronate residues in hyaluronate.. Functionally, endo-hyaluronidase that degrades hyaluronan to smaller oligosaccharide fragments. Also has chondroitin sulfate hydrolase activity, The best substrate being the galactosaminidic linkage in the sequence of a trisulfated tetrasaccharide. The polypeptide is Hyaluronidase-4 (Hyal4) (Mus musculus (Mouse)).